Reading from the N-terminus, the 59-residue chain is Mu-conotoxin SrVA (59 aa).

An N-terminal signal peptide occupies residues M1 to A22. Residues Q23 to H44 constitute a propeptide that is removed on maturation. 2 cysteine pairs are disulfide-bonded: C51–C58 and C52–C59.

Belongs to the conotoxin T superfamily. In terms of tissue distribution, expressed by the venom duct.

It localises to the secreted. Its function is as follows. Mu-conotoxins block voltage-gated sodium channels. This peptide inhibits the cardiac sodium channel hNav1.5/SCN5A (33% inhibition at 200 nM, 50% at 400 nM, and 55% at 600 nM). Does not interfere with the voltage-dependence of activation, but affects the voltage-dependence of inactivation of hNav1.5. In vivo, intracranial injection into 9-day-old mice causes transient symptoms, including extension of the body and clockwise and counter-clockwise turns, that last 3 to 4 minutes. Intracranial injection into 16-day-old mice, causes transient symptoms, including agitated breathing and occasional turning followed by scratching and grooming behavior, that last for 15-19 minutes. This is Mu-conotoxin SrVA from Conus spurius (Alphabet cone).